The following is a 600-amino-acid chain: NADH-quinone oxidoreductase subunit C/D (600 aa).

Residues methionine 1–glutamine 190 are NADH dehydrogenase I subunit C. Residues aspartate 214–arginine 600 form an NADH dehydrogenase I subunit D region.

In the N-terminal section; belongs to the complex I 30 kDa subunit family. The protein in the C-terminal section; belongs to the complex I 49 kDa subunit family. As to quaternary structure, NDH-1 is composed of 13 different subunits. Subunits NuoB, CD, E, F, and G constitute the peripheral sector of the complex.

The protein localises to the cell inner membrane. The enzyme catalyses a quinone + NADH + 5 H(+)(in) = a quinol + NAD(+) + 4 H(+)(out). Its function is as follows. NDH-1 shuttles electrons from NADH, via FMN and iron-sulfur (Fe-S) centers, to quinones in the respiratory chain. The immediate electron acceptor for the enzyme in this species is believed to be ubiquinone. Couples the redox reaction to proton translocation (for every two electrons transferred, four hydrogen ions are translocated across the cytoplasmic membrane), and thus conserves the redox energy in a proton gradient. This chain is NADH-quinone oxidoreductase subunit C/D, found in Salmonella paratyphi C (strain RKS4594).